A 123-amino-acid chain; its full sequence is Large ribosomal subunit protein eL8 (123 aa).

It belongs to the eukaryotic ribosomal protein eL8 family. May be present in up to 3 copies per 70S ribosome. Part of the 50S ribosomal subunit, where it binds 23S rRNA at its canonical site near the L1 stalk, as well as a possible second 50S binding site near helix 25 and a possible third site on the beak of the 30S subunit. Component of box C/D small ribonucleoprotein (sRNP) particles that contain rpl7ae, FlpA and nop5, plus a guide RNA. These sRNP particles form homodimers, giving rise to an asymmetric holoenzyme. Probably part of the RNase P complex.

The protein resides in the cytoplasm. Functionally, multifunctional RNA-binding protein that recognizes the K-turn motif in ribosomal RNA, the RNA component of RNase P, box H/ACA, box C/D and box C'/D' sRNAs. Component of the 70S ribosome. Component of a box C/D small ribonucleoprotein (sRNP) particle that is involved in pre-rRNA and tRNA processing. Utilizes the methyl donor S-adenosyl-L-methionine to catalyze the site-specific 2'-hydroxyl methylation of ribose moieties in rRNA and tRNA. Site specificity is provided by a guide RNA that base pairs with the substrate. Methylation occurs at a characteristic distance from the sequence involved in base pairing with the guide RNA. This chain is Large ribosomal subunit protein eL8, found in Pyrococcus furiosus (strain ATCC 43587 / DSM 3638 / JCM 8422 / Vc1).